Here is a 163-residue protein sequence, read N- to C-terminus: Nucleotide-binding protein CYB_0891 (163 aa).

The protein belongs to the YajQ family.

Functionally, nucleotide-binding protein. The protein is Nucleotide-binding protein CYB_0891 of Synechococcus sp. (strain JA-2-3B'a(2-13)) (Cyanobacteria bacterium Yellowstone B-Prime).